The primary structure comprises 255 residues: 3-deoxy-manno-octulosonate cytidylyltransferase (255 aa).

Belongs to the KdsB family.

Its subcellular location is the cytoplasm. It carries out the reaction 3-deoxy-alpha-D-manno-oct-2-ulosonate + CTP = CMP-3-deoxy-beta-D-manno-octulosonate + diphosphate. It functions in the pathway nucleotide-sugar biosynthesis; CMP-3-deoxy-D-manno-octulosonate biosynthesis; CMP-3-deoxy-D-manno-octulosonate from 3-deoxy-D-manno-octulosonate and CTP: step 1/1. It participates in bacterial outer membrane biogenesis; lipopolysaccharide biosynthesis. Functionally, activates KDO (a required 8-carbon sugar) for incorporation into bacterial lipopolysaccharide in Gram-negative bacteria. This Cellvibrio japonicus (strain Ueda107) (Pseudomonas fluorescens subsp. cellulosa) protein is 3-deoxy-manno-octulosonate cytidylyltransferase.